The primary structure comprises 356 residues: Cdc42 effector protein 4 (356 aa).

An N6-methyllysine modification is found at Lys-5. Ser-18 is subject to Phosphoserine. One can recognise a CRIB domain in the interval 27–41; that stretch reads ISAPLGDFRHTMHVG. Positions 51–102 are disordered; it reads SFLNSKAGEPDGESLDEQPSSSSSKRSLLSRKFRGSKRSQSVTRGEREQRDM. Phosphoserine is present on Ser-64. The segment covering 78–87 has biased composition (basic residues); it reads LLSRKFRGSK. Ser-105, Ser-109, and Ser-118 each carry phosphoserine. 2 disordered regions span residues 122–182 and 257–356; these read LNEK…LDEQ and VAAP…EIRV. Residues 123–132 are compositionally biased toward basic and acidic residues; that stretch reads NEKEAAEKGT. The segment covering 133–143 has biased composition (low complexity); that stretch reads SKLPKSLSSSP. 6 positions are modified to phosphoserine: Ser-138, Ser-140, Ser-142, Ser-174, Ser-292, and Ser-295. The span at 287–315 shows a compositional bias: low complexity; the sequence is AAAAPSPGSARSMGSHTTRDSSSLSSCTS. Residues 318–344 are compositionally biased toward basic and acidic residues; that stretch reads LEERSPAFRGPDRARAAVSRQPDKEFS. The segment covering 345–356 has biased composition (acidic residues); it reads FMDEEEEDEIRV.

This sequence belongs to the BORG/CEP family. As to quaternary structure, interacts with CDC42 and RHOQ, in a GTP-dependent manner. As to expression, not detected in any of the adult tissues tested. May be expressed only in fetal or embryonic tissues.

It is found in the endomembrane system. The protein localises to the cytoplasm. The protein resides in the cytoskeleton. Its function is as follows. Probably involved in the organization of the actin cytoskeleton. May act downstream of CDC42 to induce actin filament assembly leading to cell shape changes. Induces pseudopodia formation, when overexpressed in fibroblasts. The protein is Cdc42 effector protein 4 (CDC42EP4) of Homo sapiens (Human).